The chain runs to 85 residues: RNA-binding protein Hfq (85 aa).

Residues 11-71 (DTFLNHVRKS…ISTIMPGHPV (61 aa)) form the Sm domain.

This sequence belongs to the Hfq family. As to quaternary structure, homohexamer.

Functionally, RNA chaperone that binds small regulatory RNA (sRNAs) and mRNAs to facilitate mRNA translational regulation in response to envelope stress, environmental stress and changes in metabolite concentrations. Also binds with high specificity to tRNAs. Seems to be involved in the regulation of NifA. This Azorhizobium caulinodans (strain ATCC 43989 / DSM 5975 / JCM 20966 / LMG 6465 / NBRC 14845 / NCIMB 13405 / ORS 571) protein is RNA-binding protein Hfq.